A 274-amino-acid polypeptide reads, in one-letter code: Serine/threonine-protein kinase 1 (274 aa).

A Protein kinase domain is found at 17-265 (ARTALHLVNG…YEVIQKNTYW (249 aa)). ATP contacts are provided by residues 23-31 (LVNGKFGKV) and K46. The active-site Proton acceptor is D133.

It belongs to the protein kinase superfamily. Ser/Thr protein kinase family.

The catalysed reaction is L-seryl-[protein] + ATP = O-phospho-L-seryl-[protein] + ADP + H(+). It catalyses the reaction L-threonyl-[protein] + ATP = O-phospho-L-threonyl-[protein] + ADP + H(+). Its function is as follows. In vitro, can phosphorylate histone H1. The sequence is that of Serine/threonine-protein kinase 1 (PK1) from Lymantria dispar multicapsid nuclear polyhedrosis virus (LdMNPV).